The chain runs to 638 residues: 1-deoxy-D-xylulose-5-phosphate synthase (638 aa).

Thiamine diphosphate contacts are provided by residues H71 and 112 to 114 (SHA). D144 lines the Mg(2+) pocket. Thiamine diphosphate is bound by residues 145-146 (GA), N173, Y284, and E365. N173 lines the Mg(2+) pocket.

Belongs to the transketolase family. DXPS subfamily. Homodimer. Mg(2+) serves as cofactor. It depends on thiamine diphosphate as a cofactor.

The catalysed reaction is D-glyceraldehyde 3-phosphate + pyruvate + H(+) = 1-deoxy-D-xylulose 5-phosphate + CO2. It functions in the pathway metabolic intermediate biosynthesis; 1-deoxy-D-xylulose 5-phosphate biosynthesis; 1-deoxy-D-xylulose 5-phosphate from D-glyceraldehyde 3-phosphate and pyruvate: step 1/1. In terms of biological role, catalyzes the acyloin condensation reaction between C atoms 2 and 3 of pyruvate and glyceraldehyde 3-phosphate to yield 1-deoxy-D-xylulose-5-phosphate (DXP). The polypeptide is 1-deoxy-D-xylulose-5-phosphate synthase (Mycobacterium sp. (strain KMS)).